The following is a 694-amino-acid chain: Nuclear factor erythroid 2-related factor 3 (694 aa).

Residues 133–150 (ASSTGGAGASVDGGSQAV) show a composition bias toward low complexity. Disordered regions lie at residues 133 to 256 (ASST…LNGT) and 330 to 357 (DPTA…QTLP). Composition is skewed to basic and acidic residues over residues 193 to 217 (GVLR…RVSA) and 231 to 254 (NKIA…RHLN). The span at 333–357 (ARTSQSQEPFLQLNSHTTNPEQTLP) shows a compositional bias: polar residues. The bZIP domain occupies 578-641 (LIRDIRRRGK…NIMKQKLHDL (64 aa)). The tract at residues 580 to 599 (RDIRRRGKNKVAAQNCRKRK) is basic motif. Positions 606–620 (LEDDVCNLQAKKETL) are leucine-zipper.

It belongs to the bZIP family. CNC subfamily. As to quaternary structure, heterodimer with MAFG, MAFK and other small MAF proteins that binds to the MAF recognition elements (MARE). As to expression, highly expressed in human placenta and also in B-cell and monocyte cell lines. Low expression in heart, brain, lung, skeletal muscle, kidney and pancreas.

It localises to the nucleus. Activates erythroid-specific, globin gene expression. This is Nuclear factor erythroid 2-related factor 3 (NFE2L3) from Homo sapiens (Human).